Here is a 298-residue protein sequence, read N- to C-terminus: Bifunctional protein FolD (298 aa).

NADP(+) contacts are provided by residues 166 to 168 (GRS), S191, and I232.

This sequence belongs to the tetrahydrofolate dehydrogenase/cyclohydrolase family. Homodimer.

It carries out the reaction (6R)-5,10-methylene-5,6,7,8-tetrahydrofolate + NADP(+) = (6R)-5,10-methenyltetrahydrofolate + NADPH. The enzyme catalyses (6R)-5,10-methenyltetrahydrofolate + H2O = (6R)-10-formyltetrahydrofolate + H(+). It functions in the pathway one-carbon metabolism; tetrahydrofolate interconversion. Its function is as follows. Catalyzes the oxidation of 5,10-methylenetetrahydrofolate to 5,10-methenyltetrahydrofolate and then the hydrolysis of 5,10-methenyltetrahydrofolate to 10-formyltetrahydrofolate. The polypeptide is Bifunctional protein FolD (Parvibaculum lavamentivorans (strain DS-1 / DSM 13023 / NCIMB 13966)).